Consider the following 329-residue polypeptide: Isopenicillin N synthase (329 aa).

Residues Arg-87, Tyr-91, and Tyr-189 each coordinate isopenicillin N. Positions 87, 91, 189, 212, and 214 each coordinate N-[(5S)-5-amino-5-carboxypentanoyl]-L-cysteinyl-D-valine. Residues 180–286 form the Fe2OG dioxygenase domain; the sequence is TLSAVTLIHY…RLSLPFFLHA (107 aa). Fe(2+)-binding residues include His-212, Asp-214, and His-268. Arg-277 contributes to the 2-oxoglutarate binding site. Ser-279 lines the isopenicillin N pocket. Ser-279 is an N-[(5S)-5-amino-5-carboxypentanoyl]-L-cysteinyl-D-valine binding site.

Belongs to the iron/ascorbate-dependent oxidoreductase family. Requires Fe cation as cofactor. L-ascorbate is required as a cofactor.

It carries out the reaction N-[(5S)-5-amino-5-carboxypentanoyl]-L-cysteinyl-D-valine + O2 = isopenicillin N + 2 H2O. Its pathway is antibiotic biosynthesis; penicillin G biosynthesis; penicillin G from L-alpha-aminoadipate and L-cysteine and L-valine: step 2/3. Removes, in the presence of oxygen, 4 hydrogen atoms from delta-L-(alpha-aminoadipyl)-L-cysteinyl-D-valine (ACV) to form the azetidinone and thiazolidine rings of isopenicillin. The chain is Isopenicillin N synthase (pcbC) from Streptomyces griseus.